The chain runs to 575 residues: 5-aminolevulinate synthase, mitochondrial (575 aa).

Residues 1–55 (MESITRVSMSVCPFVKSSSAQALRQLSKNSALTSQARQCPFMGAALNAKESTRSY) constitute a mitochondrion transit peptide. Residues R124, S237, and K256 each coordinate substrate. Pyridoxal 5'-phosphate contacts are provided by S289, H317, and T361. K364 is an active-site residue. K364 carries the N6-(pyridoxal phosphate)lysine modification. Pyridoxal 5'-phosphate-binding residues include T393 and T394. Position 479 (T479) interacts with substrate.

The protein belongs to the class-II pyridoxal-phosphate-dependent aminotransferase family. In terms of assembly, homodimer. It depends on pyridoxal 5'-phosphate as a cofactor.

Its subcellular location is the mitochondrion matrix. The enzyme catalyses succinyl-CoA + glycine + H(+) = 5-aminolevulinate + CO2 + CoA. The protein operates within porphyrin-containing compound metabolism; protoporphyrin-IX biosynthesis; 5-aminolevulinate from glycine: step 1/1. Functionally, catalyzes the synthesis of 5-aminolevulinate (ALA) from succinyl-CoA and glycine, the first and rate-limiting step in heme biosynthesis. The protein is 5-aminolevulinate synthase, mitochondrial (HEM1) of Debaryomyces hansenii (strain ATCC 36239 / CBS 767 / BCRC 21394 / JCM 1990 / NBRC 0083 / IGC 2968) (Yeast).